The following is a 373-amino-acid chain: Probable tRNA sulfurtransferase (373 aa).

The region spanning 54-158 (NKNIEELSKV…NDVAYFYHKI (105 aa)) is the THUMP domain. ATP contacts are provided by residues 176–177 (LF), 201–202 (NF), K256, G278, and Q287.

The protein belongs to the ThiI family.

It is found in the cytoplasm. The enzyme catalyses [ThiI sulfur-carrier protein]-S-sulfanyl-L-cysteine + a uridine in tRNA + 2 reduced [2Fe-2S]-[ferredoxin] + ATP + H(+) = [ThiI sulfur-carrier protein]-L-cysteine + a 4-thiouridine in tRNA + 2 oxidized [2Fe-2S]-[ferredoxin] + AMP + diphosphate. It carries out the reaction [ThiS sulfur-carrier protein]-C-terminal Gly-Gly-AMP + S-sulfanyl-L-cysteinyl-[cysteine desulfurase] + AH2 = [ThiS sulfur-carrier protein]-C-terminal-Gly-aminoethanethioate + L-cysteinyl-[cysteine desulfurase] + A + AMP + 2 H(+). The protein operates within cofactor biosynthesis; thiamine diphosphate biosynthesis. In terms of biological role, catalyzes the ATP-dependent transfer of a sulfur to tRNA to produce 4-thiouridine in position 8 of tRNAs, which functions as a near-UV photosensor. Also catalyzes the transfer of sulfur to the sulfur carrier protein ThiS, forming ThiS-thiocarboxylate. This is a step in the synthesis of thiazole, in the thiamine biosynthesis pathway. The sulfur is donated as persulfide by IscS. The polypeptide is Probable tRNA sulfurtransferase (Saccharolobus islandicus (strain M.16.4 / Kamchatka #3) (Sulfolobus islandicus)).